We begin with the raw amino-acid sequence, 273 residues long: MSRIARTFAGLKAQGRKALIPYVTAGFPFPDITPELMHAFVAGGADVIELGVPFSDPSADGPVIQKAGDKALAAGIGMVQVLDMVRTFRTRDASTPVVLMGYANPVERYNQKHDRHDGKSAFVLDAAAAGVDGVLIVDYPPEECEAFAAELKSAGLDLIFLLAPTSTDERMQQVARVASGYVYYVSLKGVTGSGALDTGAVEAMLPRIRAHVQVPVGVGFGIRDAATARTIGQVADAVVIGSKIIQLIDEQPRDQVGPVAQKFLCEIRTALDN.

Catalysis depends on proton acceptor residues glutamate 49 and aspartate 60.

The protein belongs to the TrpA family. In terms of assembly, tetramer of two alpha and two beta chains.

It carries out the reaction (1S,2R)-1-C-(indol-3-yl)glycerol 3-phosphate + L-serine = D-glyceraldehyde 3-phosphate + L-tryptophan + H2O. It functions in the pathway amino-acid biosynthesis; L-tryptophan biosynthesis; L-tryptophan from chorismate: step 5/5. Functionally, the alpha subunit is responsible for the aldol cleavage of indoleglycerol phosphate to indole and glyceraldehyde 3-phosphate. The chain is Tryptophan synthase alpha chain from Albidiferax ferrireducens (strain ATCC BAA-621 / DSM 15236 / T118) (Rhodoferax ferrireducens).